The primary structure comprises 256 residues: Isoprenyl transferase (256 aa).

Residue aspartate 33 is part of the active site. Aspartate 33 contributes to the Mg(2+) binding site. Substrate-binding positions include 34–37 (GNGR), tryptophan 38, arginine 46, histidine 50, and 78–80 (STE). The active-site Proton acceptor is the asparagine 81. Residues tryptophan 82, arginine 84, arginine 201, and 207-209 (RIS) contribute to the substrate site. Glutamate 220 provides a ligand contact to Mg(2+).

The protein belongs to the UPP synthase family. In terms of assembly, homodimer. Mg(2+) serves as cofactor.

In terms of biological role, catalyzes the condensation of isopentenyl diphosphate (IPP) with allylic pyrophosphates generating different type of terpenoids. The chain is Isoprenyl transferase from Staphylococcus haemolyticus (strain JCSC1435).